A 259-amino-acid polypeptide reads, in one-letter code: Bis(5'-nucleosyl)-tetraphosphatase, symmetrical (259 aa).

Belongs to the Ap4A hydrolase family.

The enzyme catalyses P(1),P(4)-bis(5'-adenosyl) tetraphosphate + H2O = 2 ADP + 2 H(+). In terms of biological role, hydrolyzes diadenosine 5',5'''-P1,P4-tetraphosphate to yield ADP. This Klebsiella aerogenes (Enterobacter aerogenes) protein is Bis(5'-nucleosyl)-tetraphosphatase, symmetrical (apaH).